A 431-amino-acid polypeptide reads, in one-letter code: Protein farnesyltransferase subunit beta (431 aa).

PFTB repeat units lie at residues 130–171, 182–224, 231–273, 280–322, and 332–375; these read KRKI…SLCD, RKGI…TLLN, TEGV…AILR, VEKL…AILE, and KHAL…AVAE. (2E,6E)-farnesyl diphosphate contacts are provided by residues 258 to 261 and 301 to 304; these read HGGY and RSNK. Zn(2+)-binding residues include D307 and C309. 310 to 313 provides a ligand contact to (2E,6E)-farnesyl diphosphate; it reads YSFW. H363 contributes to the Zn(2+) binding site.

This sequence belongs to the protein prenyltransferase subunit beta family. Heterodimer of an alpha (RAM2) and a beta (RAM1) subunit. It depends on Zn(2+) as a cofactor.

Its subcellular location is the cytoplasm. It catalyses the reaction L-cysteinyl-[protein] + (2E,6E)-farnesyl diphosphate = S-(2E,6E)-farnesyl-L-cysteinyl-[protein] + diphosphate. Its function is as follows. Catalyzes the transfer of a farnesyl moiety from farnesyl diphosphate to a cysteine at the fourth position from the C-terminus of several proteins having the C-terminal sequence Cys-aliphatic-aliphatic-X where X is Ser, Ala, Met, Cys, or Gln. Required for the membrane localization of proteins such as a-factor, Ras proteins and other membrane proteins containing the C-terminal CAAX motif. The beta subunit is responsible for isoprenoid and peptide-binding. In Saccharomyces cerevisiae (strain ATCC 204508 / S288c) (Baker's yeast), this protein is Protein farnesyltransferase subunit beta.